Consider the following 83-residue polypeptide: Small ribosomal subunit protein bS20 (83 aa).

Positions 1-25 are disordered; the sequence is MPNIKSAIKRVNTTHTAEERNISQK. The segment covering 16-25 has biased composition (basic and acidic residues); it reads TAEERNISQK.

This sequence belongs to the bacterial ribosomal protein bS20 family.

Its function is as follows. Binds directly to 16S ribosomal RNA. The chain is Small ribosomal subunit protein bS20 from Staphylococcus saprophyticus subsp. saprophyticus (strain ATCC 15305 / DSM 20229 / NCIMB 8711 / NCTC 7292 / S-41).